Reading from the N-terminus, the 140-residue chain is Large ribosomal subunit protein uL14 (140 aa).

This sequence belongs to the universal ribosomal protein uL14 family.

This is Large ribosomal subunit protein uL14 (rpl-23) from Caenorhabditis elegans.